A 901-amino-acid polypeptide reads, in one-letter code: Probable dipeptidyl-aminopeptidase B (901 aa).

Over residues 1 to 22 (MSSPRPSTSSTSSDSGLSVDTT) the composition is skewed to low complexity. Positions 1–67 (MSSPRPSTSS…EPFLPSAKKQ (67 aa)) are disordered. Over 1–76 (MSSPRPSTSS…QAASGSRTSR (76 aa)) the chain is Cytoplasmic. Residues 77–97 (LIWGLVILCVAGWLWGLVLFV) traverse the membrane as a helical; Signal-anchor for type II membrane protein segment. The Vacuolar portion of the chain corresponds to 98-901 (TQNRSAQQSV…VKRSLPMLVK (804 aa)). N-linked (GlcNAc...) asparagine glycosylation is found at Asn-334 and Asn-625. The Charge relay system role is filled by Ser-739. The N-linked (GlcNAc...) asparagine glycan is linked to Asn-793. Active-site charge relay system residues include Asp-816 and His-849.

It belongs to the peptidase S9B family.

It is found in the vacuole membrane. It carries out the reaction Release of an N-terminal dipeptide, Xaa-Yaa-|-Zaa-, from a polypeptide, preferentially when Yaa is Pro, provided Zaa is neither Pro nor hydroxyproline.. In terms of biological role, type IV dipeptidyl-peptidase which removes N-terminal dipeptides sequentially from polypeptides having unsubstituted N-termini provided that the penultimate residue is proline. The protein is Probable dipeptidyl-aminopeptidase B (dapB) of Aspergillus niger (strain ATCC MYA-4892 / CBS 513.88 / FGSC A1513).